The sequence spans 389 residues: Serpentine receptor class alpha/beta-14 (389 aa).

Over 1–45 (MPSDDFVKTARKALISHSVSIQNYTEDDCQIAFHATTNSFMQTIR) the chain is Extracellular. A glycan (N-linked (GlcNAc...) asparagine) is linked at Asn23. The helical transmembrane segment at 46 to 66 (LVHIFFCTFGAISSSLFIYVL) threads the bilayer. Topologically, residues 67–81 (LNSSSRNLHRNLRIS) are cytoplasmic. Residues 82–102 (LASLAFAALIACLQLDFIAFY) traverse the membrane as a helical segment. Residues 103 to 123 (HLALTLTADNACDSMYEARKC) lie on the Extracellular side of the membrane. Cys123 and Cys198 are joined by a disulfide. The helical transmembrane segment at 124 to 144 (AILRFPVVLSIYATLCGIIVL) threads the bilayer. Residues 145 to 167 (AIERTIATLKYKTYEANGSRVVG) lie on the Cytoplasmic side of the membrane. A helical membrane pass occupies residues 168–188 (LVLVTGQWFVCIIVAVFSVLL). Residues 189 to 208 (RSDPGYVHYCTAYVSHPRTS) lie on the Extracellular side of the membrane. Residues 209–229 (VFSLCFMSALEVATLVYFVLL) traverse the membrane as a helical segment. The Cytoplasmic portion of the chain corresponds to 230–268 (LQSNQRRQVNEFVNKAMHSLSERYQLQENVRIMKILIPS). The helical transmembrane segment at 269–289 (ITVHAILGFIGLGSMLAFAII) threads the bilayer. At 290-303 (YRYADERLIVGFAP) the chain is on the extracellular side. The chain crosses the membrane as a helical span at residues 304-324 (FSEVVLLVIPIYAVVFPIVAV). The Cytoplasmic segment spans residues 325–389 (VQNKQLRLAS…FDLLNEMWKK (65 aa)).

Belongs to the nematode receptor-like protein srab family.

Its subcellular location is the membrane. The protein is Serpentine receptor class alpha/beta-14 of Caenorhabditis elegans.